A 718-amino-acid polypeptide reads, in one-letter code: Nucleolar protein 11 (718 aa).

N6-methyllysine is present on Lys-346.

As to quaternary structure, interacts with UTP4. Interacts with FBL/fibrillarin in a transcription-dependent manner. May associate with the proposed t-UTP subcomplex of the SSU processome containing at least UTP4, WDR43, HEATR1, UTP15, WDR75.

It is found in the nucleus. The protein resides in the nucleolus. Its function is as follows. Ribosome biogenesis factor. May be required for both optimal rDNA transcription and small subunit (SSU) pre-rRNA processing at sites A', A0, 1 and 2b. In Bos taurus (Bovine), this protein is Nucleolar protein 11 (NOL11).